The primary structure comprises 264 residues: Membrane-spanning 4-domains subfamily A member 10 (264 aa).

The Cytoplasmic portion of the chain corresponds to 1 to 57 (MKAEATVIPSRCARGQTTAAPGVQPWQTSVPQNTTQPKLLAPRQHEKSQKRSSLLKE). The segment covering 17–37 (TTAAPGVQPWQTSVPQNTTQP) has biased composition (polar residues). The tract at residues 17–48 (TTAAPGVQPWQTSVPQNTTQPKLLAPRQHEKS) is disordered. The helical transmembrane segment at 58-78 (LGAFHITIALLHLVFGGYLAS) threads the bilayer. The Extracellular segment spans residues 79–89 (TVKSLHLVVLK). A helical membrane pass occupies residues 90-110 (SWYPFWGAASFLISGILAITM). Residues 111–119 (KTFSKTYLK) are Cytoplasmic-facing. A helical membrane pass occupies residues 120-140 (MLCLMTNLVSLFCVLSGLFVI). The Extracellular portion of the chain corresponds to 141 to 169 (SKDLFLESPFESPIWRMYPNSTVHIQRLE). A helical transmembrane segment spans residues 170 to 190 (LALLCFTVLELFLPVPTAVTA). At 191-264 (WRDRPSAKND…GAGIWTQTAN (74 aa)) the chain is on the cytoplasmic side.

This sequence belongs to the MS4A family.

The protein resides in the membrane. In terms of biological role, may be involved in signal transduction as a component of a multimeric receptor complex. The sequence is that of Membrane-spanning 4-domains subfamily A member 10 (MS4A10) from Pongo abelii (Sumatran orangutan).